A 901-amino-acid polypeptide reads, in one-letter code: Protein translocase subunit SecA (901 aa).

ATP-binding positions include Gln87, 105–109, and Asp512; that span reads GEGKT. Zn(2+)-binding residues include Cys885, Cys887, Cys896, and His897.

It belongs to the SecA family. As to quaternary structure, monomer and homodimer. Part of the essential Sec protein translocation apparatus which comprises SecA, SecYEG and auxiliary proteins SecDF-YajC and YidC. Zn(2+) serves as cofactor.

Its subcellular location is the cell inner membrane. The protein localises to the cytoplasm. The enzyme catalyses ATP + H2O + cellular proteinSide 1 = ADP + phosphate + cellular proteinSide 2.. Its function is as follows. Part of the Sec protein translocase complex. Interacts with the SecYEG preprotein conducting channel. Has a central role in coupling the hydrolysis of ATP to the transfer of proteins into and across the cell membrane, serving both as a receptor for the preprotein-SecB complex and as an ATP-driven molecular motor driving the stepwise translocation of polypeptide chains across the membrane. This chain is Protein translocase subunit SecA, found in Salmonella typhi.